The sequence spans 416 residues: Tyrosine--tRNA ligase (416 aa).

An L-tyrosine-binding site is contributed by Tyr-34. The 'HIGH' region signature appears at 39 to 48; sequence PTGDSLHIGH. Positions 165 and 169 each coordinate L-tyrosine. The 'KMSKS' region motif lies at 227–231; sequence KFGKT. Lys-230 is an ATP binding site. One can recognise an S4 RNA-binding domain in the interval 349–416; the sequence is ENIIIWLTDN…KKHYYLARVK (68 aa).

The protein belongs to the class-I aminoacyl-tRNA synthetase family. TyrS type 1 subfamily. Homodimer.

It is found in the cytoplasm. The catalysed reaction is tRNA(Tyr) + L-tyrosine + ATP = L-tyrosyl-tRNA(Tyr) + AMP + diphosphate + H(+). Catalyzes the attachment of tyrosine to tRNA(Tyr) in a two-step reaction: tyrosine is first activated by ATP to form Tyr-AMP and then transferred to the acceptor end of tRNA(Tyr). This chain is Tyrosine--tRNA ligase, found in Limosilactobacillus reuteri (strain DSM 20016) (Lactobacillus reuteri).